The following is a 258-amino-acid chain: Thiazole synthase (258 aa).

Catalysis depends on K100, which acts as the Schiff-base intermediate with DXP. 1-deoxy-D-xylulose 5-phosphate-binding positions include G161, 187–188 (AG), and 209–210 (NT).

The protein belongs to the ThiG family. In terms of assembly, homotetramer. Forms heterodimers with either ThiH or ThiS.

It localises to the cytoplasm. The catalysed reaction is [ThiS sulfur-carrier protein]-C-terminal-Gly-aminoethanethioate + 2-iminoacetate + 1-deoxy-D-xylulose 5-phosphate = [ThiS sulfur-carrier protein]-C-terminal Gly-Gly + 2-[(2R,5Z)-2-carboxy-4-methylthiazol-5(2H)-ylidene]ethyl phosphate + 2 H2O + H(+). It functions in the pathway cofactor biosynthesis; thiamine diphosphate biosynthesis. Catalyzes the rearrangement of 1-deoxy-D-xylulose 5-phosphate (DXP) to produce the thiazole phosphate moiety of thiamine. Sulfur is provided by the thiocarboxylate moiety of the carrier protein ThiS. In vitro, sulfur can be provided by H(2)S. The chain is Thiazole synthase from Campylobacter jejuni subsp. jejuni serotype O:23/36 (strain 81-176).